Here is a 76-residue protein sequence, read N- to C-terminus: Exodeoxyribonuclease 7 small subunit (76 aa).

Belongs to the XseB family. In terms of assembly, heterooligomer composed of large and small subunits.

Its subcellular location is the cytoplasm. It carries out the reaction Exonucleolytic cleavage in either 5'- to 3'- or 3'- to 5'-direction to yield nucleoside 5'-phosphates.. Functionally, bidirectionally degrades single-stranded DNA into large acid-insoluble oligonucleotides, which are then degraded further into small acid-soluble oligonucleotides. This Geotalea uraniireducens (strain Rf4) (Geobacter uraniireducens) protein is Exodeoxyribonuclease 7 small subunit.